A 65-amino-acid chain; its full sequence is Large ribosomal subunit protein bL35 (65 aa).

It belongs to the bacterial ribosomal protein bL35 family.

In Borrelia duttonii (strain Ly), this protein is Large ribosomal subunit protein bL35.